A 332-amino-acid chain; its full sequence is Succinylglutamate desuccinylase (332 aa).

Zn(2+) is bound by residues His59, Glu62, and His151. Residue Glu215 is part of the active site.

It belongs to the AspA/AstE family. Succinylglutamate desuccinylase subfamily. Zn(2+) is required as a cofactor.

The enzyme catalyses N-succinyl-L-glutamate + H2O = L-glutamate + succinate. The protein operates within amino-acid degradation; L-arginine degradation via AST pathway; L-glutamate and succinate from L-arginine: step 5/5. Its function is as follows. Transforms N(2)-succinylglutamate into succinate and glutamate. The sequence is that of Succinylglutamate desuccinylase from Pseudomonas aeruginosa (strain LESB58).